We begin with the raw amino-acid sequence, 245 residues long: tRNA1(Val) (adenine(37)-N6)-methyltransferase (245 aa).

It belongs to the methyltransferase superfamily. tRNA (adenine-N(6)-)-methyltransferase family.

It is found in the cytoplasm. The catalysed reaction is adenosine(37) in tRNA1(Val) + S-adenosyl-L-methionine = N(6)-methyladenosine(37) in tRNA1(Val) + S-adenosyl-L-homocysteine + H(+). Functionally, specifically methylates the adenine in position 37 of tRNA(1)(Val) (anticodon cmo5UAC). The protein is tRNA1(Val) (adenine(37)-N6)-methyltransferase of Escherichia coli (strain SE11).